The chain runs to 342 residues: C-X-C chemokine receptor type 6 (342 aa).

Residues 1-32 (MAEYDHYEDNGFNSFNDSSQEEHQDFLQFSKV) are Extracellular-facing. The N-linked (GlcNAc...) asparagine glycan is linked to N16. A helical transmembrane segment spans residues 33–59 (FLPCMYLVVFVCGLVGNSLVLVISIFY). Residues 60–68 (HKLQSLTDV) are Cytoplasmic-facing. A helical membrane pass occupies residues 69 to 89 (FLVNLPLADLVFVCTLPFWAY). Residues 90–103 (AGIHEWIFGQVMCK) lie on the Extracellular side of the membrane. A disulfide bridge links C102 with C180. A helical membrane pass occupies residues 104–125 (TLLGIYTINFYTSMLILTCITV). At 126–143 (DRFIVVVKATKAYNQQAK) the chain is on the cytoplasmic side. Residues 144-164 (KMTWGKVICLLIWVISLLVSL) traverse the membrane as a helical segment. The Extracellular portion of the chain corresponds to 165–187 (PQIIYGNVFNLDKLICGYHDEEI). The chain crosses the membrane as a helical span at residues 188–215 (STVVLATQMTLGFFLPLLAMIVCYSVII). Topologically, residues 216–231 (KTLLHAGGFQKHRSLK) are cytoplasmic. A helical transmembrane segment spans residues 232–259 (IIFLVMAVFLLTQTPFNLVKLIRSTHWE). Topologically, residues 260 to 275 (YYAMTSFHYTIIVTEA) are extracellular. The helical transmembrane segment at 276-293 (IAYLRACLNPVLYAFVSL) threads the bilayer. Over 294-342 (KFRKNFWKLVKDIGCLPYLGVSHQWKSSEDNSKTFSASHNVEATSMFQL) the chain is Cytoplasmic.

This sequence belongs to the G-protein coupled receptor 1 family.

Its subcellular location is the cell membrane. In terms of biological role, receptor for the C-X-C chemokine CXCL16. Used as a coreceptor by SIVs and by strains of HIV-2 and m-tropic HIV-1. The polypeptide is C-X-C chemokine receptor type 6 (CXCR6) (Chlorocebus aethiops (Green monkey)).